Reading from the N-terminus, the 432-residue chain is Adenylosuccinate synthetase (432 aa).

GTP contacts are provided by residues 13-19 (GDEGKGK) and 41-43 (GHT). Asp-14 (proton acceptor) is an active-site residue. Positions 14 and 41 each coordinate Mg(2+). IMP contacts are provided by residues 14 to 17 (DEGK), 39 to 42 (NAGH), Thr-130, Arg-144, Gln-225, Thr-240, and Arg-304. His-42 acts as the Proton donor in catalysis. 300 to 306 (AVTGRPR) is a substrate binding site. GTP is bound by residues Arg-306, 332–334 (KLD), and 415–417 (STG).

It belongs to the adenylosuccinate synthetase family. In terms of assembly, homodimer. The cofactor is Mg(2+).

Its subcellular location is the cytoplasm. It carries out the reaction IMP + L-aspartate + GTP = N(6)-(1,2-dicarboxyethyl)-AMP + GDP + phosphate + 2 H(+). It functions in the pathway purine metabolism; AMP biosynthesis via de novo pathway; AMP from IMP: step 1/2. Plays an important role in the de novo pathway of purine nucleotide biosynthesis. Catalyzes the first committed step in the biosynthesis of AMP from IMP. The polypeptide is Adenylosuccinate synthetase (Histophilus somni (strain 129Pt) (Haemophilus somnus)).